Here is an 852-residue protein sequence, read N- to C-terminus: Metastasis-associated in colon cancer protein 1 (852 aa).

Serine 19 is modified (phosphoserine). Residues 212–349 (VTIACKVNHQ…LSQVMYLVVA (138 aa)) form the ZU5 domain. Residues 549-619 (NFSNYGVTLK…HCKNVKVISK (71 aa)) enclose the SH3 domain.

In terms of assembly, interacts with FASLG. In terms of tissue distribution, preferentially expressed in metastasizing tumors.

It localises to the cytoplasm. It is found in the nucleus. Its function is as follows. Acts as a transcription activator for MET and as a key regulator of HGF-MET signaling. Promotes cell motility, proliferation and hepatocyte growth factor (HGF)-dependent scattering in vitro and tumor growth and metastasis in vivo. This is Metastasis-associated in colon cancer protein 1 (MACC1) from Homo sapiens (Human).